A 262-amino-acid chain; its full sequence is Small ribosomal subunit protein eS1 (262 aa).

The protein belongs to the eukaryotic ribosomal protein eS1 family. As to quaternary structure, component of the small ribosomal subunit. Mature ribosomes consist of a small (40S) and a large (60S) subunit. The 40S subunit contains about 33 different proteins and 1 molecule of RNA (18S). The 60S subunit contains about 49 different proteins and 3 molecules of RNA (25S, 5.8S and 5S).

It is found in the cytoplasm. The protein is Small ribosomal subunit protein eS1 of Cryptosporidium hominis.